A 177-amino-acid polypeptide reads, in one-letter code: Large ribosomal subunit protein uL5 (177 aa).

Belongs to the universal ribosomal protein uL5 family. In terms of assembly, part of the 50S ribosomal subunit; part of the 5S rRNA/L5/L18/L25 subcomplex. Contacts the 5S rRNA and the P site tRNA. Forms a bridge to the 30S subunit in the 70S ribosome.

Functionally, this is one of the proteins that bind and probably mediate the attachment of the 5S RNA into the large ribosomal subunit, where it forms part of the central protuberance. In the 70S ribosome it contacts protein S13 of the 30S subunit (bridge B1b), connecting the 2 subunits; this bridge is implicated in subunit movement. Contacts the P site tRNA; the 5S rRNA and some of its associated proteins might help stabilize positioning of ribosome-bound tRNAs. In Anaplasma phagocytophilum (strain HZ), this protein is Large ribosomal subunit protein uL5.